Consider the following 1338-residue polypeptide: Thioester-containing protein 1 allele S3 (1338 aa).

Positions 1 to 21 are cleaved as a signal peptide; it reads MWQFIRSRILTVIIFIGAAHG. N-linked (GlcNAc...) asparagine glycosylation is found at asparagine 68, asparagine 199, asparagine 242, asparagine 312, and asparagine 481. Residues 580-609 form a may contain the cleavage site region; sequence ENEFDIFHSLGLFARTLDDILFDSANEKTG. N-linked (GlcNAc...) asparagine glycans are attached at residues asparagine 637, asparagine 728, asparagine 813, and asparagine 828. Positions 859-862 form a cross-link, isoglutamyl cysteine thioester (Cys-Gln); the sequence is CGEQ. Disulfide bonds link cysteine 1217–cysteine 1283, cysteine 1326–cysteine 1338, and cysteine 1329–cysteine 1334.

Heterodimer of a TEP1-N chain and an TEP1-C chain non-covalently linked. Forms a complex composed of TEP1-N and TEP1-C heterodimer, LRIM1 and APL1C; the interaction stabilizes TEP1-N and TEP1-C heterodimer, prevents its binding to tissues while circulating in the hemolymph and protects the thioester bond from hydrolysis. Mature TEP1 and to a lesser extent full-length TEP1 interact with SPCLIP1; the interaction is induced by microbial infection. In the hemolymph, the full-length protein is cleaved by an unknow protease into a 75kDa N-terminal (TEP1-N) chain and an 80kDa C-terminal (TEP1-C) chain which remain non-covalently linked. The TEP1-C chain contains the thioester bond which covalently binds to the pathogen surface. Cleavage is induced by bacterial infection or aseptic wound injury. During embryonic and pupal development, the cleaved form is the predominant form. Post-translationally, N-glycosylated.

Its subcellular location is the secreted. Functionally, plays an essential role in the innate immune response against bacteria, fungi and protozoa infection. After proteolytic cleavage, the protein C-terminus binds covalently through a thioester bond to the pathogen surface resulting in pathogen clearance either by melanization or lysis. Initiate the recruitment and activation of a cascade of proteases, mostly of CLIP-domain serine proteases, which leads to the proteolytic cleavage of the prophenoloxidase (PPO) into active phenoloxidase (PO), the rate-limiting enzyme in melanin biosynthesis. In response to parasite P.berghei-mediated infection, binds to and mediates killing of ookinetes, as they egress from midgut epithelial cells into the basal labyrinth, by both lysis and melanization. During bacterial infection, binds to both Gram-positive and Gram-negative bacteria but only promotes phagocytosis of Gram-negative bacteria. Promotes the accumulation of SPCLIP1 onto the surface of P.berghei ookinetes and bacterium E.coli which leads to the melanization of the pathogen. Recruits CLIPA2 to bacteria surface. In response to bacterial infection, required for periostial hemocyte aggregation, but not for the aggregation of sessile hemocytes in non-periostial regions. During the late stage of fungus B.bassiana-mediated infection, required for the initiation of hyphae melanization by binding to the surface of hyphae and recruiting prophenoloxidase PPO to them. Plays a role in male fertility by binding to defective sperm cells and promoting their removal during spermatogenesis. Binds to and mediates killing of parasite P.bergei ookinetes by lysis. Its function is as follows. Binds covalently through a thioester bond to the pathogen surface resulting in pathogen clearance. The chain is Thioester-containing protein 1 allele S3 from Anopheles gambiae (African malaria mosquito).